The chain runs to 465 residues: Ribulose bisphosphate carboxylase large chain (465 aa).

Residue Lys4 is modified to N6,N6,N6-trimethyllysine. Asn113 and Thr163 together coordinate substrate. The active-site Proton acceptor is Lys165. Lys167 contacts substrate. Positions 191, 193, and 194 each coordinate Mg(2+). Residue Lys191 is modified to N6-carboxylysine. His284 serves as the catalytic Proton acceptor. Substrate-binding residues include Arg285, His317, and Ser369.

It belongs to the RuBisCO large chain family. Type I subfamily. As to quaternary structure, heterohexadecamer of 8 large chains and 8 small chains; disulfide-linked. The disulfide link is formed within the large subunit homodimers. It depends on Mg(2+) as a cofactor. In terms of processing, the disulfide bond which can form in the large chain dimeric partners within the hexadecamer appears to be associated with oxidative stress and protein turnover.

Its subcellular location is the plastid. It localises to the chloroplast. The enzyme catalyses 2 (2R)-3-phosphoglycerate + 2 H(+) = D-ribulose 1,5-bisphosphate + CO2 + H2O. It catalyses the reaction D-ribulose 1,5-bisphosphate + O2 = 2-phosphoglycolate + (2R)-3-phosphoglycerate + 2 H(+). Functionally, ruBisCO catalyzes two reactions: the carboxylation of D-ribulose 1,5-bisphosphate, the primary event in carbon dioxide fixation, as well as the oxidative fragmentation of the pentose substrate in the photorespiration process. Both reactions occur simultaneously and in competition at the same active site. The protein is Ribulose bisphosphate carboxylase large chain of Bauera rubioides (Dog rose).